Reading from the N-terminus, the 295-residue chain is Origin of replication complex subunit 6 (295 aa).

Residues 212–295 (PSKRKHDDDS…MALEVSSAAN (84 aa)) are disordered. Over residues 220–236 (DSDSSGESSGDDQDELD) the composition is skewed to acidic residues. Over residues 254–263 (WKSSVLSNKQ) the composition is skewed to polar residues.

The protein belongs to the ORC6 family. Component of the origin recognition complex (ORC) composed of at least ORC1, ORC2, ORC3, ORC4, ORC5 and ORC6. ORC is regulated in a cell-cycle and development dependent manner. It is sequentially assembled at the exit from anaphase of mitosis and disassembled as cells enter S phase.

Its subcellular location is the nucleus. Its function is as follows. Component of the origin recognition complex (ORC) that binds origins of replication. DNA-binding is ATP-dependent. The specific DNA sequences that define origins of replication have not been identified yet. ORC is required to assemble the pre-replication complex necessary to initiate DNA replication. In Oryza sativa subsp. japonica (Rice), this protein is Origin of replication complex subunit 6.